The following is a 272-amino-acid chain: Shikimate dehydrogenase (NADP(+)) (272 aa).

Residues 20-22 and Thr-67 contribute to the shikimate site; that span reads TMS. Residue Lys-71 is the Proton acceptor of the active site. Glu-83 contributes to the NADP(+) binding site. Asn-92 and Asp-107 together coordinate shikimate. NADP(+) contacts are provided by residues 129–133, 153–158, and Leu-216; these read GAGGA and NRTKSK. Tyr-218 lines the shikimate pocket. An NADP(+)-binding site is contributed by Gly-239.

It belongs to the shikimate dehydrogenase family. In terms of assembly, homodimer.

It carries out the reaction shikimate + NADP(+) = 3-dehydroshikimate + NADPH + H(+). Its pathway is metabolic intermediate biosynthesis; chorismate biosynthesis; chorismate from D-erythrose 4-phosphate and phosphoenolpyruvate: step 4/7. Its function is as follows. Involved in the biosynthesis of the chorismate, which leads to the biosynthesis of aromatic amino acids. Catalyzes the reversible NADPH linked reduction of 3-dehydroshikimate (DHSA) to yield shikimate (SA). This chain is Shikimate dehydrogenase (NADP(+)), found in Maridesulfovibrio salexigens (strain ATCC 14822 / DSM 2638 / NCIMB 8403 / VKM B-1763) (Desulfovibrio salexigens).